We begin with the raw amino-acid sequence, 269 residues long: Protein LNK3 (269 aa).

Interacts with REV8.

Functionally, probable transcriptional coactivator. The chain is Protein LNK3 from Arabidopsis thaliana (Mouse-ear cress).